Consider the following 640-residue polypeptide: Threonine--tRNA ligase (640 aa).

Residues 1–61 enclose the TGS domain; the sequence is MPVVTLPDGS…DKDSHLAIIT (61 aa). A catalytic region spans residues 242–533; the sequence is DHRRLGKQLD…LIENHAGNMP (292 aa). Residues Cys-333, His-384, and His-510 each contribute to the Zn(2+) site.

Belongs to the class-II aminoacyl-tRNA synthetase family. In terms of assembly, homodimer. Requires Zn(2+) as cofactor.

The protein resides in the cytoplasm. It carries out the reaction tRNA(Thr) + L-threonine + ATP = L-threonyl-tRNA(Thr) + AMP + diphosphate + H(+). Its function is as follows. Catalyzes the attachment of threonine to tRNA(Thr) in a two-step reaction: L-threonine is first activated by ATP to form Thr-AMP and then transferred to the acceptor end of tRNA(Thr). Also edits incorrectly charged L-seryl-tRNA(Thr). The sequence is that of Threonine--tRNA ligase from Polynucleobacter asymbioticus (strain DSM 18221 / CIP 109841 / QLW-P1DMWA-1) (Polynucleobacter necessarius subsp. asymbioticus).